The following is a 552-amino-acid chain: MISKINGKLFADMIIQGAQNLSNNADLVDSLNVYPVPDGDTGTNMNLTITSGREEVENNLSQSIGELGKTFSKGLLMGARGNSGVILSQLFRGFCKNIETENEINAQQLASSFQAGVDTAYKAVMKPVEGTILTVAKDAAKAAVNKAEETDDCVEVMEYTIAEAEKSLNNTPNLLAVLKEVGVVDSGGKGLLCVYEGFLKGLTGQTIEAKKEKLNTEELVHEEHDFHGVINTEDIKYGYCTEMMVRFGKDKRAFDEQTFRTDMSQFGDSLLVINDDEIVKVHVHTETPGEVFNYGQEYGELIKLKVENMREQHREVIRKEKLNHHSDEQEESKTVETAIIAISMGDGISELFTSMGATHIISGGQTMNPSTEDIVKVIEQSQCKRAIILPNNKNIRMSSDQAATLVEADTVVIPTTSIPKGIAALFQYDPSSSLEDNHSHMTTALESVKSGSVTFAVRDTKIDGVEIKKGEFMGLSESKIVTSNDDEFVTVTGLLKSMLNEDSEILTIIAGEDANDDISDKLVEWVESEYPDVEVEEHNGGQPIYQYLFSVE.

Residues 8–200 (KLFADMIIQG…LLCVYEGFLK (193 aa)) enclose the DhaL domain.

This is an uncharacterized protein from Staphylococcus haemolyticus (strain JCSC1435).